The chain runs to 317 residues: Ricin B-like lectin EULS3 (317 aa).

Residues methionine 1–histidine 11 show a composition bias toward basic residues. A disordered region spans residues methionine 1–proline 157. A compositionally biased stretch (pro residues) spans valine 25–proline 36. Polar residues predominate over residues histidine 136 to glycine 146. Residues threonine 168 to phenylalanine 315 form the Ricin B-type lectin domain.

Interacts (via N-terminus) with ATS3A and ATS3B. Expressed in roots, rosette leaves, stems, cauline leaves and flowers.

The protein localises to the nucleus. It is found in the cytoplasm. In terms of biological role, lectin which binds carbohydrates in vitro. Interacts through its lectin domain with glycan structures containing one or more Lewis X, Lewis Y or lactosamine motifs. May play a role in abiotic stress responses. May play a role in abscisic acid-induced stomatal closure. May play a role in disease resistance against Pseudomonas syringae through its involvement in stomatal movement. This is Ricin B-like lectin EULS3 from Arabidopsis thaliana (Mouse-ear cress).